The chain runs to 309 residues: Ribonuclease Z (309 aa).

Zn(2+) is bound by residues His-63, His-65, Asp-67, His-68, His-145, Asp-216, and His-274. Asp-67 functions as the Proton acceptor in the catalytic mechanism.

Belongs to the RNase Z family. In terms of assembly, homodimer. It depends on Zn(2+) as a cofactor.

It carries out the reaction Endonucleolytic cleavage of RNA, removing extra 3' nucleotides from tRNA precursor, generating 3' termini of tRNAs. A 3'-hydroxy group is left at the tRNA terminus and a 5'-phosphoryl group is left at the trailer molecule.. In terms of biological role, zinc phosphodiesterase, which displays some tRNA 3'-processing endonuclease activity. Probably involved in tRNA maturation, by removing a 3'-trailer from precursor tRNA. The chain is Ribonuclease Z from Streptococcus pneumoniae serotype 2 (strain D39 / NCTC 7466).